Here is a 432-residue protein sequence, read N- to C-terminus: Alpha-2 adrenergic receptor (432 aa).

Over 1–32 (MDPLNATGMDAFTAIHLNASWSADSGYSLAAI) the chain is Extracellular. N-linked (GlcNAc...) asparagine glycosylation is found at asparagine 5 and asparagine 18. A helical membrane pass occupies residues 33–57 (ASIAALVSFLILFTVVGNILVVIAV). Topologically, residues 58 to 69 (LTSRALKAPQNL) are cytoplasmic. The helical transmembrane segment at 70-95 (FLVSLATADILVATLVMPFSLANELM) threads the bilayer. Over 96 to 105 (GYWYFGKVWC) the chain is Extracellular. Residues cysteine 105 and cysteine 183 are joined by a disulfide bond. Residues 106–128 (GIYLALDVLFCTSSIVHLCAISL) traverse the membrane as a helical segment. The Cytoplasmic portion of the chain corresponds to 129 to 149 (DRYWSVTQAVEYNLKRTPKRV). Residues 150–172 (KCIIVIVWLISAFISSPPLLSID) form a helical membrane-spanning segment. Over 173 to 188 (SNNYISSQPQCMLNDD) the chain is Extracellular. A helical transmembrane segment spans residues 189–212 (TWYILSSSMASFFAPCLIMILVYI). The Cytoplasmic segment spans residues 213–356 (RIYQVAKTRT…QAREKRFTFV (144 aa)). Positions 222–319 (TRSMSGKEPR…SISKQSARIS (98 aa)) are disordered. Composition is skewed to polar residues over residues 235-246 (VTQTENGLNKAN) and 265-275 (SQRTVTIGQQT). Basic and acidic residues predominate over residues 288–300 (GKGHKPQRQDSQR). Residues 309–319 (SSISKQSARIS) show a composition bias toward polar residues. Residues 357 to 380 (LAVVMGVFVVCWFPFFFSYSLHAV) traverse the membrane as a helical segment. At 381-393 (CRDYCKIPDTLFK) the chain is on the extracellular side. Residues 394 to 413 (FFWIGYCNSSLNPAIYTIFN) traverse the membrane as a helical segment. The Cytoplasmic segment spans residues 414 to 432 (RDFRRAFQKILCKSWKKSF).

The protein belongs to the G-protein coupled receptor 1 family.

It localises to the cell membrane. Its function is as follows. Alpha-2 adrenergic receptors mediate the catecholamine-induced inhibition of adenylate cyclase through the action of G proteins. In Labrus ossifagus (Cuckoo wrasse), this protein is Alpha-2 adrenergic receptor.